A 1267-amino-acid chain; its full sequence is BOS complex subunit NOMO2 (1267 aa).

The signal sequence occupies residues 1 to 31 (MLVGQGAGLLGPAVVTAAVVLLLSGVGPAHG). The Lumenal portion of the chain corresponds to 32-1155 (SEDIVVGCGG…NPTRKLPEQD (1124 aa)). N-linked (GlcNAc...) asparagine glycosylation is found at Asn50, Asn218, and Asn618. A helical membrane pass occupies residues 1156–1176 (IAQGSYIALPLTLLVLLAGYN). The Cytoplasmic segment spans residues 1177-1267 (HDKLIPLLLQ…LETTATCIHY (91 aa)). Residues 1198 to 1219 (GQAASDNSGPEDAKRQAKKQKT) form a disordered region.

As to quaternary structure, component of the back of Sec61 (BOS) complex, composed of NCLN/Nicalin, NOMO (NOMO1, NOMO2 or NOMO3) and TMEM147. The BOS complex is part of the multi-pass translocon (MPT) complex, composed of three subcomplexes, the GEL complex (composed of RAB5IF/OPTI and TMCO1), the BOS complex (composed of NCLN/Nicalin, NOMO and TMEM147) and the PAT complex (composed of WDR83OS/Asterix and CCDC47). The MPT complex associates with the SEC61 complex. Due to the strong similarity between NOMO1, NOMO2 and NOMO3, similar interaction pattern probably occur for the three gene copies. In terms of tissue distribution, highly expressed in pancreas and skeletal muscle and, at lower levels, in heart.

The protein resides in the endoplasmic reticulum membrane. Its function is as follows. Component of the multi-pass translocon (MPT) complex that mediates insertion of multi-pass membrane proteins into the lipid bilayer of membranes. The MPT complex takes over after the SEC61 complex: following membrane insertion of the first few transmembrane segments of proteins by the SEC61 complex, the MPT complex occludes the lateral gate of the SEC61 complex to promote insertion of subsequent transmembrane regions. In Homo sapiens (Human), this protein is BOS complex subunit NOMO2 (NOMO2).